The sequence spans 399 residues: Acetate kinase (399 aa).

Asn7 contacts Mg(2+). An ATP-binding site is contributed by Lys14. Arg91 is a binding site for substrate. The active-site Proton donor/acceptor is Asp148. ATP contacts are provided by residues 208-212 (HIGNG), 283-285 (DMR), and 331-335 (GVGEN). A Mg(2+)-binding site is contributed by Glu385.

It belongs to the acetokinase family. In terms of assembly, homodimer. Mg(2+) serves as cofactor. Requires Mn(2+) as cofactor.

The protein localises to the cytoplasm. The catalysed reaction is acetate + ATP = acetyl phosphate + ADP. It participates in metabolic intermediate biosynthesis; acetyl-CoA biosynthesis; acetyl-CoA from acetate: step 1/2. Functionally, catalyzes the formation of acetyl phosphate from acetate and ATP. Can also catalyze the reverse reaction. This Bacteroides thetaiotaomicron (strain ATCC 29148 / DSM 2079 / JCM 5827 / CCUG 10774 / NCTC 10582 / VPI-5482 / E50) protein is Acetate kinase.